Here is a 155-residue protein sequence, read N- to C-terminus: Ribosomal RNA large subunit methyltransferase H (155 aa).

Residues Leu-72, Gly-103, and 122 to 127 (LSALTL) each bind S-adenosyl-L-methionine.

It belongs to the RNA methyltransferase RlmH family. Homodimer.

It is found in the cytoplasm. It carries out the reaction pseudouridine(1915) in 23S rRNA + S-adenosyl-L-methionine = N(3)-methylpseudouridine(1915) in 23S rRNA + S-adenosyl-L-homocysteine + H(+). Functionally, specifically methylates the pseudouridine at position 1915 (m3Psi1915) in 23S rRNA. The protein is Ribosomal RNA large subunit methyltransferase H of Enterobacter sp. (strain 638).